The primary structure comprises 226 residues: PKHD-type hydroxylase PFL_0865 (226 aa).

Residues 78–178 (KVFPPLINCY…RYASFFWTQS (101 aa)) enclose the Fe2OG dioxygenase domain. The Fe cation site is built by His-96, Asp-98, and His-159. Residue Arg-169 coordinates 2-oxoglutarate.

Fe(2+) serves as cofactor. It depends on L-ascorbate as a cofactor.

The polypeptide is PKHD-type hydroxylase PFL_0865 (Pseudomonas fluorescens (strain ATCC BAA-477 / NRRL B-23932 / Pf-5)).